A 397-amino-acid chain; its full sequence is Glia-derived nexin (397 aa).

An N-terminal signal peptide occupies residues methionine 1 to histidine 19. Residue asparagine 159 is glycosylated (N-linked (GlcNAc...) asparagine).

Belongs to the serpin family. As to expression, most abundant in seminal vesicles.

Its subcellular location is the secreted. It localises to the extracellular space. Its function is as follows. Serine protease inhibitor with activity toward thrombin, trypsin, and urokinase. Promotes neurite extension by inhibiting thrombin. Binds heparin. This chain is Glia-derived nexin (Serpine2), found in Mus musculus (Mouse).